Consider the following 582-residue polypeptide: MNPINLVQLLFFLSVLLVLSWPLGLYAARVYQGQPCVMDKILGPLERLLYRISGVDASREMDWKIYALVMLGLNAFGMVFVYVLERLQGGLPLNPLHLPGVDPFVAVNTAVSFATNTNWQAYAGESTMSILTQMLGLAVQNFLSAATGMAVAVALIRGLARRETTHLGNFWQDLTRSVLYILLPLSFVLALLLVWQGVPQTFTGQVEADWLDPAPHVAESISPDTPSTDQPPAKQTIVLGPVASQVAIKQLGTNGGGYFNVNSAHPLENPTPLTNLLEMLAILLIPAALCHTFGVMIGDRRQGLAILAAMTILFAGFAALTLAAESVPNPTLSGIGVPAVPSLEGKEVRFGTAGSALWAAATTAASNGSVNAMHDSFSPLGGMWPMLLMQLGEVVYGGVGSGLYGMLVFAVVTVFVAGLMVGRTPEYCGKKIEPFETKMAALVILIPPFLCLAGTALAAVIGPADAVSNPGPHGFSQMLYAFSSMGNNNGSAFAGLTATSPFWTIAGAVAMFVSRYWLIVPVLALAGSLAGKKRLAQGPGTLPTHGGIFVALLIIVVLVVGALTFVPALALGPIAEQLALFQ.

11 consecutive transmembrane segments (helical) span residues 6 to 26, 65 to 85, 87 to 107, 136 to 156, 178 to 198, 277 to 297, 304 to 324, 402 to 422, 441 to 461, 505 to 525, and 546 to 566; these read LVQLLFFLSVLLVLSWPLGLY, IYALVMLGLNAFGMVFVYVLE, LQGGLPLNPLHLPGVDPFVAV, GLAVQNFLSAATGMAVAVALI, VLYILLPLSFVLALLLVWQGV, LEMLAILLIPAALCHTFGVMI, LAILAAMTILFAGFAALTLAA, GLYGMLVFAVVTVFVAGLMVG, ALVILIPPFLCLAGTALAAVI, IAGAVAMFVSRYWLIVPVLAL, and GGIFVALLIIVVLVVGALTFV.

Belongs to the KdpA family. The system is composed of three essential subunits: KdpA, KdpB and KdpC.

Its subcellular location is the cell inner membrane. Its function is as follows. Part of the high-affinity ATP-driven potassium transport (or Kdp) system, which catalyzes the hydrolysis of ATP coupled with the electrogenic transport of potassium into the cytoplasm. This subunit binds the periplasmic potassium ions and delivers the ions to the membrane domain of KdpB through an intramembrane tunnel. The polypeptide is Potassium-transporting ATPase potassium-binding subunit (Solidesulfovibrio magneticus (strain ATCC 700980 / DSM 13731 / RS-1) (Desulfovibrio magneticus)).